The following is a 382-amino-acid chain: Succinate--CoA ligase [ADP-forming] subunit beta (382 aa).

The 232-residue stretch at 9–240 (KELFSKYGVK…PRDVSEFEMY (232 aa)) folds into the ATP-grasp domain. ATP is bound by residues Lys45, 52-54 (GRG), Val94, and Glu99. Mg(2+) contacts are provided by Asn193 and Asp207. Substrate is bound by residues Asn260 and 317-319 (GIT).

This sequence belongs to the succinate/malate CoA ligase beta subunit family. As to quaternary structure, heterotetramer of two alpha and two beta subunits. Mg(2+) serves as cofactor.

It catalyses the reaction succinate + ATP + CoA = succinyl-CoA + ADP + phosphate. It carries out the reaction GTP + succinate + CoA = succinyl-CoA + GDP + phosphate. The protein operates within carbohydrate metabolism; tricarboxylic acid cycle; succinate from succinyl-CoA (ligase route): step 1/1. Its function is as follows. Succinyl-CoA synthetase functions in the citric acid cycle (TCA), coupling the hydrolysis of succinyl-CoA to the synthesis of either ATP or GTP and thus represents the only step of substrate-level phosphorylation in the TCA. The beta subunit provides nucleotide specificity of the enzyme and binds the substrate succinate, while the binding sites for coenzyme A and phosphate are found in the alpha subunit. The protein is Succinate--CoA ligase [ADP-forming] subunit beta of Pyrobaculum arsenaticum (strain DSM 13514 / JCM 11321 / PZ6).